The sequence spans 166 residues: Phosphopantetheine adenylyltransferase (166 aa).

Substrate is bound at residue S11. ATP is bound by residues 11-12 (SF) and H19. The substrate site is built by K43, A76, and R90. ATP-binding positions include 91–93 (GLR), E101, and 126–132 (LQPISSS).

The protein belongs to the bacterial CoaD family. In terms of assembly, homohexamer. Mg(2+) serves as cofactor.

The protein localises to the cytoplasm. The catalysed reaction is (R)-4'-phosphopantetheine + ATP + H(+) = 3'-dephospho-CoA + diphosphate. Its pathway is cofactor biosynthesis; coenzyme A biosynthesis; CoA from (R)-pantothenate: step 4/5. In terms of biological role, reversibly transfers an adenylyl group from ATP to 4'-phosphopantetheine, yielding dephospho-CoA (dPCoA) and pyrophosphate. The protein is Phosphopantetheine adenylyltransferase of Streptococcus equi subsp. zooepidemicus (strain MGCS10565).